We begin with the raw amino-acid sequence, 239 residues long: Large ribosomal subunit protein uL2 (239 aa).

Positions 200–239 (VNHPHGGKEHHIGRPSTVSRRAPPGRKVGHIAARRTGRRK) are disordered. The span at 222-239 (PPGRKVGHIAARRTGRRK) shows a compositional bias: basic residues.

It belongs to the universal ribosomal protein uL2 family. Part of the 50S ribosomal subunit. Forms a bridge to the 30S subunit in the 70S ribosome.

In terms of biological role, one of the primary rRNA binding proteins. Required for association of the 30S and 50S subunits to form the 70S ribosome, for tRNA binding and peptide bond formation. It has been suggested to have peptidyltransferase activity; this is somewhat controversial. Makes several contacts with the 16S rRNA in the 70S ribosome. The polypeptide is Large ribosomal subunit protein uL2 (Thermococcus gammatolerans (strain DSM 15229 / JCM 11827 / EJ3)).